A 186-amino-acid chain; its full sequence is Peptide deformylase (186 aa).

The Fe cation site is built by Cys-113 and His-156. Glu-157 is an active-site residue. Fe cation is bound at residue His-160.

It belongs to the polypeptide deformylase family. The cofactor is Fe(2+).

It carries out the reaction N-terminal N-formyl-L-methionyl-[peptide] + H2O = N-terminal L-methionyl-[peptide] + formate. Functionally, removes the formyl group from the N-terminal Met of newly synthesized proteins. Requires at least a dipeptide for an efficient rate of reaction. N-terminal L-methionine is a prerequisite for activity but the enzyme has broad specificity at other positions. The chain is Peptide deformylase from Levilactobacillus brevis (strain ATCC 367 / BCRC 12310 / CIP 105137 / JCM 1170 / LMG 11437 / NCIMB 947 / NCTC 947) (Lactobacillus brevis).